We begin with the raw amino-acid sequence, 232 residues long: Alpha N-terminal protein methyltransferase 1 (232 aa).

S-adenosyl-L-methionine is bound by residues Gly71, Arg76, 123-124 (MQ), and Gln139.

This sequence belongs to the methyltransferase superfamily. NTM1 family.

The protein resides in the cytoplasm. It carries out the reaction N-terminal L-alanyl-L-prolyl-L-lysyl-[protein] + 3 S-adenosyl-L-methionine = N-terminal N,N,N-trimethyl-L-alanyl-L-prolyl-L-lysyl-[protein] + 3 S-adenosyl-L-homocysteine + 3 H(+). It catalyses the reaction N-terminal L-seryl-L-prolyl-L-lysyl-[protein] + 3 S-adenosyl-L-methionine = N-terminal N,N,N-trimethyl-L-seryl-L-prolyl-L-lysyl-[protein] + 3 S-adenosyl-L-homocysteine + 3 H(+). The catalysed reaction is N-terminal L-prolyl-L-prolyl-L-lysyl-[protein] + 2 S-adenosyl-L-methionine = N-terminal N,N-dimethyl-L-prolyl-L-prolyl-L-lysyl-[protein] + 2 S-adenosyl-L-homocysteine + 2 H(+). Alpha-N-methyltransferase that methylates the N-terminus of target proteins containing the N-terminal motif [Ala/Pro/Ser]-Pro-Lys when the initiator Met is cleaved. Specifically catalyzes mono-, di- or tri-methylation of exposed alpha-amino group of Ala or Ser residue in the [Ala/Ser]-Pro-Lys motif and mono- or di-methylation of Pro in the Pro-Pro-Lys motif. Responsible for the N-terminal methylation of the ribosomal proteins RPL12A, RPL12B, RPS25A and RPS25B. The polypeptide is Alpha N-terminal protein methyltransferase 1 (TAE1) (Saccharomyces cerevisiae (strain ATCC 204508 / S288c) (Baker's yeast)).